Reading from the N-terminus, the 501-residue chain is MPFSADSVTSLRQLADALAARSVSAEELAREYLARIEQAAALNAFIHVDAERTLAQARAADERRARGEAAPLTGVPIAHKDVFVTRGWRATAGSKMLANYESPFDATVVERMAAAGMVTLGKTNMDEFAMGSSNENSHFGPVRNPWDTSRVPGGSSGGSAAAVAAGLAPAATGTDTGGSIRQPSSFSGITGIKPTYGRVSRYGMIAFASSLDQAGPMAHSAEDCALLLNAMAGFDPRDSTSITPAQGGVDEDYTRLLGQPRAGATTERPLAGLRIGLPKEYFGKGLSADVEQAVRAALAEYEKLGATLVEVTLPKTELSIPVYYVIAPAEASSNLSRFDGVRYGHRAAEYRDLLDMYKKSRAEGFGAEVKRRIMVGTYVLSHGYYDAYYLQAQKIRRIIADDFQRAFAQCDVIMGPVAPTVAWKLGEKTSDPVQMYLADIFTLSTSLAGLPGMSVPCGFGEAGMPVGLQLIGNYFDEARLLQTAHAFQQATDWHLRRPGKA.

Active-site charge relay system residues include Lys-80 and Ser-155. Ser-179 acts as the Acyl-ester intermediate in catalysis.

The protein belongs to the amidase family. GatA subfamily. Heterotrimer of A, B and C subunits.

It catalyses the reaction L-glutamyl-tRNA(Gln) + L-glutamine + ATP + H2O = L-glutaminyl-tRNA(Gln) + L-glutamate + ADP + phosphate + H(+). Functionally, allows the formation of correctly charged Gln-tRNA(Gln) through the transamidation of misacylated Glu-tRNA(Gln) in organisms which lack glutaminyl-tRNA synthetase. The reaction takes place in the presence of glutamine and ATP through an activated gamma-phospho-Glu-tRNA(Gln). The polypeptide is Glutamyl-tRNA(Gln) amidotransferase subunit A (Cupriavidus necator (strain ATCC 17699 / DSM 428 / KCTC 22496 / NCIMB 10442 / H16 / Stanier 337) (Ralstonia eutropha)).